A 436-amino-acid chain; its full sequence is EPS I polysaccharide export inner membrane protein EpsE (436 aa).

The next 12 membrane-spanning stretches (helical) occupy residues 20 to 40 (VLGLGAAVASRGAVFLVNIML), 49 to 69 (FGLFSYAYVTALNLGLFLATG), 91 to 111 (LCAFIVLLVALIAVAATALYL), 132 to 152 (MAAIVLIATAFTQALQAFLYA), 160 to 180 (ASVSIGAALLLLAMLWTMGPI), 184 to 204 (VVALVIFLAINAGAAASQLVI), 234 to 254 (VLTTSMGAPVHWICLSMLAAM), 261 to 281 (LALFSVAFQWYIAITFIPATL), 307 to 327 (ALLFGGGLSLALGCMAFLLAG), 341 to 361 (AAASMRSLAVAAALCGISVLL), 375 to 395 (FAMAAVYSVIYVAAAYLALRL), and 396 to 416 (GYGAPSIGLAMSAAYCCLILF).

The protein to E.coli bicyclomycin resistance protein (BCR).

The protein resides in the cell inner membrane. In terms of biological role, probably involved in polymerization and/or export of exopolysaccharide EPS I which functions as a virulence factor. May play a role in export of EPS I or its intermediates across the membranes. The polypeptide is EPS I polysaccharide export inner membrane protein EpsE (epsE) (Ralstonia nicotianae (strain ATCC BAA-1114 / GMI1000) (Ralstonia solanacearum)).